We begin with the raw amino-acid sequence, 183 residues long: Adenylate kinase (183 aa).

Residue Gly-12–Thr-17 participates in ATP binding. The NMP stretch occupies residues Ser-32 to Val-61. AMP-binding positions include Thr-33, Arg-38, Glu-59–Val-61, Gly-86–Arg-89, and Gln-93. Positions Ala-127–Asp-133 are LID. ATP is bound at residue Arg-128. AMP contacts are provided by Arg-130 and Arg-141. Gly-169 contacts ATP.

Belongs to the adenylate kinase family. As to quaternary structure, monomer.

It is found in the cytoplasm. It catalyses the reaction AMP + ATP = 2 ADP. Its pathway is purine metabolism; AMP biosynthesis via salvage pathway; AMP from ADP: step 1/1. Catalyzes the reversible transfer of the terminal phosphate group between ATP and AMP. Plays an important role in cellular energy homeostasis and in adenine nucleotide metabolism. The polypeptide is Adenylate kinase (Parasynechococcus marenigrum (strain WH8102)).